The following is a 232-amino-acid chain: 7-cyano-7-deazaguanine synthase 2 (232 aa).

9-19 (FSGGQDSTTCL) is a binding site for ATP. C189, C198, C201, and C204 together coordinate Zn(2+).

It belongs to the QueC family. Zn(2+) serves as cofactor.

The enzyme catalyses 7-carboxy-7-deazaguanine + NH4(+) + ATP = 7-cyano-7-deazaguanine + ADP + phosphate + H2O + H(+). The protein operates within purine metabolism; 7-cyano-7-deazaguanine biosynthesis. Its function is as follows. Catalyzes the ATP-dependent conversion of 7-carboxy-7-deazaguanine (CDG) to 7-cyano-7-deazaguanine (preQ(0)). The chain is 7-cyano-7-deazaguanine synthase 2 from Pseudomonas fluorescens (strain ATCC BAA-477 / NRRL B-23932 / Pf-5).